The primary structure comprises 478 residues: Noelin-3 (478 aa).

The first 23 residues, 1-23 (MSPPLLKLGAVLSTMAMISNWMS), serve as a signal peptide directing secretion. N33, N95, N179, N299, and N465 each carry an N-linked (GlcNAc...) asparagine glycan. Positions 77 to 217 (CSRDAKSRQL…TRLRDCMKKL (141 aa)) form a coiled coil. An Olfactomedin-like domain is found at 218–470 (TCGKLMKITG…QVLFNVTLFH (253 aa)). C219 and C401 form a disulfide bridge.

As to quaternary structure, peripherally associated with AMPAR complex. AMPAR complex consists of an inner core made of 4 pore-forming GluA/GRIA proteins (GRIA1, GRIA2, GRIA3 and GRIA4) and 4 major auxiliary subunits arranged in a twofold symmetry. One of the two pairs of distinct binding sites is occupied either by CNIH2, CNIH3 or CACNG2, CACNG3. The other harbors CACNG2, CACNG3, CACNG4, CACNG8 or GSG1L. This inner core of AMPAR complex is complemented by outer core constituents binding directly to the GluA/GRIA proteins at sites distinct from the interaction sites of the inner core constituents. Outer core constituents include at least PRRT1, PRRT2, CKAMP44/SHISA9, FRRS1L and NRN1. The proteins of the inner and outer core serve as a platform for other, more peripherally associated AMPAR constituents, including OLFM3. Alone or in combination, these auxiliary subunits control the gating and pharmacology of the AMPAR complex and profoundly impact their biogenesis and protein processing. Homodimer. Interacts with MYOC. Interacts with OLFM2. In terms of tissue distribution, in the eye, expressed in trabecular meshwork and neural retina; in non-ocular tissues, expressed in brain and lung.

It localises to the secreted. The protein localises to the synapse. The sequence is that of Noelin-3 (OLFM3) from Homo sapiens (Human).